Here is a 295-residue protein sequence, read N- to C-terminus: Probable aspartoacylase (295 aa).

Residues His-13 and Glu-16 each coordinate Zn(2+). Substrate is bound by residues Arg-54 and 61-62 (NR). His-100 contributes to the Zn(2+) binding site. Substrate-binding residues include Glu-158 and Tyr-268.

Belongs to the AspA/AstE family. Aspartoacylase subfamily. Zn(2+) is required as a cofactor.

It catalyses the reaction an N-acyl-L-aspartate + H2O = a carboxylate + L-aspartate. The chain is Probable aspartoacylase from Prochlorococcus marinus subsp. pastoris (strain CCMP1986 / NIES-2087 / MED4).